Reading from the N-terminus, the 122-residue chain is MNLPDGTQLVVGRQLAKVKSNQNWIRIPEYKVRGNKVIISHLWVGSINMPRRPFWSFRELWEKHLGRKDAINVWSRIRSYNTQVLLKILELLEKEPETQAKKLVKRATMHQLRNIAESFEEL.

This is an uncharacterized protein from Aquifex aeolicus (strain VF5).